A 408-amino-acid polypeptide reads, in one-letter code: Cytochrome P450 55A3 (408 aa).

Heme is bound at residue Cys-357.

This sequence belongs to the cytochrome P450 family. It depends on heme as a cofactor.

The chain is Cytochrome P450 55A3 (CYP55A3) from Fusarium lichenicola (Cylindrocarpon lichenicola).